Here is a 162-residue protein sequence, read N- to C-terminus: Phospholipase A and acyltransferase 2 (162 aa).

Residues 1–133 (MALARPRPRL…VSRSDQVTGA (133 aa)) are Cytoplasmic-facing. The LRAT domain occupies 13-129 (LIEISRFGYA…LRYGVSRSDQ (117 aa)). Active-site residues include His-23 and His-35. The active-site Acyl-thioester intermediate is the Cys-113. A helical transmembrane segment spans residues 134–154 (VTTVGVAAGLLAAASLVGILL). At 155–162 (ARSKRERQ) the chain is on the lumenal side.

The protein belongs to the H-rev107 family. In terms of tissue distribution, expressed in liver, kidney, small intestine testis and colon. Undetectable in testis, placenta, salivary gland and fetal brain.

It localises to the cytoplasm. The protein localises to the membrane. The enzyme catalyses a 1,2-diacyl-sn-glycero-3-phosphocholine + H2O = a 1-acyl-sn-glycero-3-phosphocholine + a fatty acid + H(+). It catalyses the reaction a 1,2-diacyl-sn-glycero-3-phosphocholine + H2O = a 2-acyl-sn-glycero-3-phosphocholine + a fatty acid + H(+). It carries out the reaction a 1,2-diacyl-sn-glycero-3-phosphoethanolamine + a 1,2-diacyl-sn-glycero-3-phosphocholine = an N-acyl-1,2-diacyl-sn-glycero-3-phosphoethanolamine + a 1-acyl-sn-glycero-3-phosphocholine + H(+). The catalysed reaction is a 1,2-diacyl-sn-glycero-3-phosphoethanolamine + a 1,2-diacyl-sn-glycero-3-phosphocholine = an N-acyl-1,2-diacyl-sn-glycero-3-phosphoethanolamine + a 2-acyl-sn-glycero-3-phosphocholine + H(+). The enzyme catalyses 1,2-dihexadecanoyl-sn-glycero-3-phosphocholine + H2O = 1-hexadecanoyl-sn-glycero-3-phosphocholine + hexadecanoate + H(+). It catalyses the reaction 1,2-dihexadecanoyl-sn-glycero-3-phosphocholine + H2O = 2-hexadecanoyl-sn-glycero-3-phosphocholine + hexadecanoate + H(+). It carries out the reaction 1-hexadecanoyl-2-(9Z-octadecenoyl)-sn-glycero-3-phosphocholine + H2O = 2-(9Z-octadecenoyl)-sn-glycero-3-phosphocholine + hexadecanoate + H(+). The catalysed reaction is 1-hexadecanoyl-2-(9Z-octadecenoyl)-sn-glycero-3-phosphocholine + H2O = 1-hexadecanoyl-sn-glycero-3-phosphocholine + (9Z)-octadecenoate + H(+). The enzyme catalyses 1-hexadecanoyl-2-(5Z,8Z,11Z,14Z-eicosatetraenoyl)-sn-glycero-3-phosphocholine + H2O = 2-(5Z,8Z,11Z,14Z)-eicosatetraenoyl-sn-glycero-3-phosphocholine + hexadecanoate + H(+). It catalyses the reaction 1-hexadecanoyl-2-(9Z,12Z-octadecadienoyl)-sn-glycero-3-phosphoethanolamine + H2O = 1-hexadecanoyl-sn-glycero-3-phosphoethanolamine + (9Z,12Z)-octadecadienoate + H(+). It carries out the reaction 1-hexadecanoyl-2-(9Z,12Z-octadecadienoyl)-sn-glycero-3-phosphoethanolamine + H2O = 2-(9Z,12Z)-octadecadienoyl-sn-glycero-3-phosphoethanolamine + hexadecanoate + H(+). The catalysed reaction is 1-hexadecanoyl-2-(5Z,8Z,11Z,14Z-eicosatetraenoyl)-sn-glycero-3-phosphoethanolamine + H2O = 1-hexadecanoyl-sn-glycero-3-phosphoethanolamine + (5Z,8Z,11Z,14Z)-eicosatetraenoate + H(+). The enzyme catalyses 1-hexadecanoyl-2-(5Z,8Z,11Z,14Z-eicosatetraenoyl)-sn-glycero-3-phosphoethanolamine + H2O = 2-(5Z,8Z,11Z,14Z)-eicosatetraenoyl-sn-glycero-3-phosphoethanolamine + hexadecanoate + H(+). It catalyses the reaction 1,2-di-(9Z-octadecenoyl)-sn-glycero-3-phosphoethanolamine + 1,2-dihexadecanoyl-sn-glycero-3-phosphocholine = N-hexadecanoyl-1,2-di-(9Z-octadecenoyl)-sn-glycero-3-phosphoethanolamine + 2-hexadecanoyl-sn-glycero-3-phosphocholine + H(+). It carries out the reaction 1,2-di-(9Z-octadecenoyl)-sn-glycero-3-phosphoethanolamine + 1,2-dihexadecanoyl-sn-glycero-3-phosphocholine = N-hexadecanoyl-1,2-di-(9Z-octadecenoyl)-sn-glycero-3-phosphoethanolamine + 1-hexadecanoyl-sn-glycero-3-phosphocholine + H(+). The catalysed reaction is 1-hexanoyl-2-acyl-sn-glycero-3-phosphocholine + H2O = 1-hexanoyl-sn-glycero-3-phosphocholine + a fatty acid + H(+). The enzyme catalyses 1,2-diheptadecanoyl-sn-glycero-3-phosphoethanolamine + 1-(9Z-octadecenoyl)-2-hexadecanoyl-sn-glycero-3-phosphocholine = 1,2-diheptadecanoyl-sn-glycero-3-phospho-N-hexadecanoyl-ethanolamine + 1-(9Z-octadecenoyl)-sn-glycero-3-phosphocholine + H(+). It catalyses the reaction 1,2-diheptadecanoyl-sn-glycero-3-phosphoethanolamine + 1-(9Z-octadecenoyl)-2-hexadecanoyl-sn-glycero-3-phosphocholine = 1,2-diheptadecanoyl-sn-glycero-3-phospho-N-(9Z-octadecenoyl)-ethanolamine + 2-hexadecanoyl-sn-glycero-3-phosphocholine + H(+). It carries out the reaction 1,2-dihexanoyl-sn-glycero-3-phosphocholine + 1,2-diheptanoyl-sn-glycero-3-phosphocholine = 1-heptanoyl-2-hexanoyl-sn-glycero-3-phosphocholine + 1-hexanoyl-2-heptanoyl-sn-glycero-3-phosphocholine. The catalysed reaction is 1,2-diheptanoyl-sn-glycero-3-phosphocholine + 1,2-dihexadecanoyl-sn-glycero-3-phosphocholine = 1-hexadecanoyl-2-heptanoyl-sn-glycero-3-phosphocholine + 1-heptanoyl-2-hexadecanoyl-sn-glycero-3-phosphocholine. The enzyme catalyses 1,2-dihexanoyl-sn-glycero-3-phosphoethanolamine + 1,2-diheptanoyl-sn-glycero-3-phosphocholine = 1-heptanoyl-2-hexanoyl-sn-glycero-3-phosphoethanolamine + 1-hexanoyl-2-heptanoyl-sn-glycero-3-phosphocholine. It catalyses the reaction 1-hexanoyl-2-acyl-sn-glycero-3-phosphocholine + H2O = hexanoate + a 2-acyl-sn-glycero-3-phosphocholine + H(+). It carries out the reaction 1,2-dihexanoyl-sn-glycero-3-phosphoethanolamine + 2-heptanoyl-sn-glycero-3-phosphocholine = hexanoyl-sn-glycero-3-phosphoethanolamine + 1-hexanoyl-2-heptanoyl-sn-glycero-3-phosphocholine. Its function is as follows. Exhibits both phospholipase A1/2 and acyltransferase activities. Shows phospholipase A1 (PLA1) and A2 (PLA2) activity, catalyzing the calcium-independent release of fatty acids from the sn-1 or sn-2 position of glycerophospholipids. For most substrates, PLA1 activity is much higher than PLA2 activity. Shows O-acyltransferase activity, catalyzing the transfer of a fatty acyl group from glycerophospholipid to the hydroxyl group of lysophospholipid. Shows N-acyltransferase activity, catalyzing the calcium-independent transfer of a fatty acyl group at the sn-1 position of phosphatidylcholine (PC) and other glycerophospholipids to the primary amine of phosphatidylethanolamine (PE), forming N-acylphosphatidylethanolamine (NAPE), which serves as precursor for N-acylethanolamines (NAEs). Catalyzes N-acylation of PE using both sn-1 and sn-2 palmitoyl groups of PC as acyl donor. Exhibits high phospholipase A1/2 activity and low N-acyltransferase activity. This chain is Phospholipase A and acyltransferase 2, found in Homo sapiens (Human).